The sequence spans 351 residues: Spermidine/putrescine import ATP-binding protein PotA (351 aa).

The ABC transporter domain occupies 6 to 236 (LELRNVTKEY…PENAWVANFI (231 aa)). 38–45 (GPSGCGKT) is a binding site for ATP.

This sequence belongs to the ABC transporter superfamily. Spermidine/putrescine importer (TC 3.A.1.11.1) family. The complex is composed of two ATP-binding proteins (PotA), two transmembrane proteins (PotB and PotC) and a solute-binding protein (PotD).

It localises to the cell membrane. It catalyses the reaction ATP + H2O + polyamine-[polyamine-binding protein]Side 1 = ADP + phosphate + polyamineSide 2 + [polyamine-binding protein]Side 1.. Functionally, part of the ABC transporter complex PotABCD involved in spermidine/putrescine import. Responsible for energy coupling to the transport system. This chain is Spermidine/putrescine import ATP-binding protein PotA, found in Mycoplasma capricolum subsp. capricolum (strain California kid / ATCC 27343 / NCTC 10154).